The primary structure comprises 180 residues: MSNKYSLNDDELQLFRTSITGTKKLRQDTYTHKPLRRKIGELPAKRALQEQVDASFYFSDEFQPQLDTEGPTRYVRPGASHYELKKLRRGDYSPELFLDLHGLTQLQAKQELGALLAACRREHVYCACVMHGHGKHILKQQTPLWLAQHPDVLAFHQAPKEFGGNAALLVLVALEAPSLE.

The 76-residue stretch at 98–173 (LDLHGLTQLQ…GNAALLVLVA (76 aa)) folds into the Smr domain.

It belongs to the SmrB family. In terms of assembly, associates with collided ribosomes, but not with correctly translating polysomes.

Functionally, acts as a ribosome collision sensor. Detects stalled/collided disomes (pairs of ribosomes where the leading ribosome is stalled and a second ribosome has collided with it) and endonucleolytically cleaves mRNA at the 5' boundary of the stalled ribosome. Stalled/collided disomes form a new interface (primarily via the 30S subunits) that binds SmrB. Cleaved mRNA becomes available for tmRNA ligation, leading to ribosomal subunit dissociation and rescue of stalled ribosomes. This chain is Ribosome rescue factor SmrB, found in Pectobacterium atrosepticum (strain SCRI 1043 / ATCC BAA-672) (Erwinia carotovora subsp. atroseptica).